A 308-amino-acid chain; its full sequence is Homogentisate phytyltransferase (308 aa).

The next 8 membrane-spanning stretches (helical) occupy residues 13–33, 44–64, 104–124, 142–162, 173–193, 219–241, 245–263, and 279–299; these read PHTI…TILG, LDLV…IVGL, LAIA…SLII, AALC…FLFF, ITPI…IAIF, VFRG…GLWA, LNTA…LLWW, and FYQF…LALW.

It belongs to the UbiA prenyltransferase family.

It localises to the membrane. It catalyses the reaction phytyl diphosphate + homogentisate + H(+) = 2-methyl-6-phytyl-1,4-benzene-1,4-diol + CO2 + diphosphate. It participates in cofactor biosynthesis; tocopherol biosynthesis. Its function is as follows. Involved in the synthesis of tocopherol (vitamin E). Catalyzes the condensation of homogentisate and phytyl diphosphate to form dimethylphytylhydrquinone. In Synechocystis sp. (strain ATCC 27184 / PCC 6803 / Kazusa), this protein is Homogentisate phytyltransferase.